Reading from the N-terminus, the 424-residue chain is Piriformospora indica-insensitive protein 2 (424 aa).

The N-terminal stretch at 1-21 is a signal peptide; it reads MLWQTFFSSLLLLSLLFGCNG. LRR repeat units follow at residues 141–166, 167–190, 191–213, 214–237, 238–263, 265–286, 287–311, 312–336, 337–360, and 362–387; these read ASNLESLEFRSNPGLIGELPETIGNL, TKLKSLVVLENGFSGELPASICNL, KRLKRLVFAGNSFAGMIPNCFKG, LKELLILDLSRNSFSGTLPTSFGD, LVSLLKLDLSNNLLEGNLPQELGFLK, LTLLDLRNNRFSGGLSKNIENI, QSLTELVLSNNPMGEEDMVGTNWGK, MSNLVVLDLSKMGLRGEIPTSLTNL, KRLRFLGLNNNNLTGFVPSKKLEA, and PCLGALYINGNNLTGELRFSTKFYEK.

It is found in the cell membrane. Its function is as follows. Required for growth promotion and enhanced seed production mediated by the endophytic fungus Piriformospora indica. This is Piriformospora indica-insensitive protein 2 (PII-2) from Arabidopsis thaliana (Mouse-ear cress).